We begin with the raw amino-acid sequence, 308 residues long: Pantothenate kinase (308 aa).

90–97 contributes to the ATP binding site; it reads GSVAVGKS.

This sequence belongs to the prokaryotic pantothenate kinase family.

The protein localises to the cytoplasm. The enzyme catalyses (R)-pantothenate + ATP = (R)-4'-phosphopantothenate + ADP + H(+). It functions in the pathway cofactor biosynthesis; coenzyme A biosynthesis; CoA from (R)-pantothenate: step 1/5. The protein is Pantothenate kinase of Sorangium cellulosum (strain So ce56) (Polyangium cellulosum (strain So ce56)).